The following is a 185-amino-acid chain: Potassium-transporting ATPase KdpC subunit (185 aa).

A helical transmembrane segment spans residues 14 to 34 (ALSLLTGVAYPLALTGIAAVI). The segment at 105-128 (AQNGAPAPVDAVTASGSGLDPHVS) is disordered.

The protein belongs to the KdpC family. As to quaternary structure, the system is composed of three essential subunits: KdpA, KdpB and KdpC.

It is found in the cell inner membrane. Functionally, part of the high-affinity ATP-driven potassium transport (or Kdp) system, which catalyzes the hydrolysis of ATP coupled with the electrogenic transport of potassium into the cytoplasm. This subunit acts as a catalytic chaperone that increases the ATP-binding affinity of the ATP-hydrolyzing subunit KdpB by the formation of a transient KdpB/KdpC/ATP ternary complex. The polypeptide is Potassium-transporting ATPase KdpC subunit (Cereibacter sphaeroides (strain ATCC 17029 / ATH 2.4.9) (Rhodobacter sphaeroides)).